Here is a 62-residue protein sequence, read N- to C-terminus: Large ribosomal subunit protein uL30 (62 aa).

This sequence belongs to the universal ribosomal protein uL30 family. Part of the 50S ribosomal subunit.

This chain is Large ribosomal subunit protein uL30, found in Staphylococcus carnosus (strain TM300).